The sequence spans 117 residues: Fluoride-specific ion channel FluC 2 (117 aa).

The next 2 helical transmembrane spans lie at 1–21 and 46–66; these read MISIILVMIGGGFGAITRSAI and FLIGLNIGLSISISWFPAFFV. Residues Gly71 and Thr74 each coordinate Na(+). A helical transmembrane segment spans residues 95–115; the sequence is LFLNYSLLQFIIGFIACYIGY.

It belongs to the fluoride channel Fluc/FEX (TC 1.A.43) family.

The protein resides in the cell membrane. It carries out the reaction fluoride(in) = fluoride(out). Its activity is regulated as follows. Na(+) is not transported, but it plays an essential structural role and its presence is essential for fluoride channel function. Fluoride-specific ion channel. Important for reducing fluoride concentration in the cell, thus reducing its toxicity. This chain is Fluoride-specific ion channel FluC 2, found in Staphylococcus aureus (strain MSSA476).